The following is a 247-amino-acid chain: Methionyl-tRNA formyltransferase (247 aa).

This sequence belongs to the Fmt family.

The enzyme catalyses L-methionyl-tRNA(fMet) + (6R)-10-formyltetrahydrofolate = N-formyl-L-methionyl-tRNA(fMet) + (6S)-5,6,7,8-tetrahydrofolate + H(+). Functionally, attaches a formyl group to the free amino group of methionyl-tRNA(fMet). The formyl group appears to play a dual role in the initiator identity of N-formylmethionyl-tRNA by promoting its recognition by IF2 and preventing the misappropriation of this tRNA by the elongation apparatus. The sequence is that of Methionyl-tRNA formyltransferase (fmt) from Vibrio alginolyticus.